The chain runs to 169 residues: Major pepsin inhibitor 3 (169 aa).

Residues 1 to 20 (MHVWLILSLASLWTSSIAYS) form the signal peptide. Gln21 carries the pyrrolidone carboxylic acid modification. 3 disulfides stabilise this stretch: Cys33–Cys79, Cys68–Cys86, and Cys99–Cys166. The tract at residues 135–169 (EEQQENQPPSSGMPHGAVPAGGLSPPPPPSFCTVQ) is disordered. The span at 158–169 (SPPPPPSFCTVQ) shows a compositional bias: pro residues.

The protein belongs to the protease inhibitor I33 family. Body wall.

It is found in the secreted. This is an inhibitor of the aspartic protease pepsin. The sequence is that of Major pepsin inhibitor 3 from Ascaris suum (Pig roundworm).